Reading from the N-terminus, the 752-residue chain is Ribonucleases P/MRP protein subunit popl-1 (752 aa).

The segment at 638-663 (KTTKRKRVNRKKRESKKRRKIEQEKR) is disordered. Residues 640 to 657 (TKRKRVNRKKRESKKRRK) are compositionally biased toward basic residues.

Component of nuclear RNase P and RNase MRP ribonucleoproteins. Several subunits of RNase P are also part of the RNase MRP complex.

Its subcellular location is the nucleus. The protein resides in the nucleolus. It catalyses the reaction Endonucleolytic cleavage of RNA, removing 5'-extranucleotides from tRNA precursor.. Its function is as follows. Component of ribonuclease P, a ribonucleoprotein complex that generates mature tRNA molecules by cleaving their 5'-ends. Also a component of the MRP ribonuclease complex, which cleaves pre-rRNA sequences. This chain is Ribonucleases P/MRP protein subunit popl-1, found in Caenorhabditis elegans.